We begin with the raw amino-acid sequence, 606 residues long: 4-hydroxy-3-methylbut-2-en-1-yl diphosphate synthase (flavodoxin) (606 aa).

Positions 513, 516, 547, and 554 each coordinate [4Fe-4S] cluster.

This sequence belongs to the IspG family. [4Fe-4S] cluster is required as a cofactor.

It carries out the reaction (2E)-4-hydroxy-3-methylbut-2-enyl diphosphate + oxidized [flavodoxin] + H2O + 2 H(+) = 2-C-methyl-D-erythritol 2,4-cyclic diphosphate + reduced [flavodoxin]. The protein operates within isoprenoid biosynthesis; isopentenyl diphosphate biosynthesis via DXP pathway; isopentenyl diphosphate from 1-deoxy-D-xylulose 5-phosphate: step 5/6. Functionally, converts 2C-methyl-D-erythritol 2,4-cyclodiphosphate (ME-2,4cPP) into 1-hydroxy-2-methyl-2-(E)-butenyl 4-diphosphate. The sequence is that of 4-hydroxy-3-methylbut-2-en-1-yl diphosphate synthase (flavodoxin) from Chlamydia abortus (strain DSM 27085 / S26/3) (Chlamydophila abortus).